We begin with the raw amino-acid sequence, 503 residues long: ATP-dependent RNA helicase dbp3 (503 aa).

Positions 1–25 (MAKRVQHEGGDYRPQKRSKNERNGE) are enriched in basic and acidic residues. The disordered stretch occupies residues 1 to 35 (MAKRVQHEGGDYRPQKRSKNERNGEGSKVSPSAEA). Residues 104–112 (SFSSPTPIQ) carry the Q motif motif. In terms of domain architecture, Helicase ATP-binding spans 116–292 (WPLLFAGRDV…ATFMTSAVTV (177 aa)). 129-136 (AETGSGKT) contacts ATP. A DEAD box motif is present at residues 239–242 (DEAD). One can recognise a Helicase C-terminal domain in the interval 307–472 (RIKQVVEVVK…DVPDALLKFG (166 aa)).

This sequence belongs to the DEAD box helicase family. DDX5/DBP2 subfamily.

The protein localises to the nucleus. It localises to the nucleolus. The enzyme catalyses ATP + H2O = ADP + phosphate + H(+). Functionally, ATP-dependent RNA helicase required for 60S ribosomal subunit synthesis. Involved in efficient pre-rRNA processing, predominantly at site A3, which is necessary for the normal formation of 25S and 5.8S rRNAs. In Neosartorya fischeri (strain ATCC 1020 / DSM 3700 / CBS 544.65 / FGSC A1164 / JCM 1740 / NRRL 181 / WB 181) (Aspergillus fischerianus), this protein is ATP-dependent RNA helicase dbp3 (dbp3).